The sequence spans 283 residues: Pantothenate synthetase (283 aa).

ATP is bound at residue 30–37; sequence MGNLHDGH. H37 serves as the catalytic Proton donor. A (R)-pantoate-binding site is contributed by Q61. Q61 lines the beta-alanine pocket. 149–152 is an ATP binding site; sequence GEKD. Q155 provides a ligand contact to (R)-pantoate. Residue 186–189 coordinates ATP; sequence LSSR.

Belongs to the pantothenate synthetase family. In terms of assembly, homodimer.

The protein resides in the cytoplasm. It catalyses the reaction (R)-pantoate + beta-alanine + ATP = (R)-pantothenate + AMP + diphosphate + H(+). It participates in cofactor biosynthesis; (R)-pantothenate biosynthesis; (R)-pantothenate from (R)-pantoate and beta-alanine: step 1/1. Catalyzes the condensation of pantoate with beta-alanine in an ATP-dependent reaction via a pantoyl-adenylate intermediate. The chain is Pantothenate synthetase from Escherichia fergusonii (strain ATCC 35469 / DSM 13698 / CCUG 18766 / IAM 14443 / JCM 21226 / LMG 7866 / NBRC 102419 / NCTC 12128 / CDC 0568-73).